A 384-amino-acid chain; its full sequence is Chorismate synthase (384 aa).

NADP(+) contacts are provided by arginine 40 and arginine 46. FMN-binding positions include 127-129 (RTS), 247-248 (QA), alanine 292, 307-311 (KPIPT), and arginine 333.

This sequence belongs to the chorismate synthase family. In terms of assembly, homotetramer. The cofactor is FMNH2.

It carries out the reaction 5-O-(1-carboxyvinyl)-3-phosphoshikimate = chorismate + phosphate. The protein operates within metabolic intermediate biosynthesis; chorismate biosynthesis; chorismate from D-erythrose 4-phosphate and phosphoenolpyruvate: step 7/7. Catalyzes the anti-1,4-elimination of the C-3 phosphate and the C-6 proR hydrogen from 5-enolpyruvylshikimate-3-phosphate (EPSP) to yield chorismate, which is the branch point compound that serves as the starting substrate for the three terminal pathways of aromatic amino acid biosynthesis. This reaction introduces a second double bond into the aromatic ring system. The sequence is that of Chorismate synthase from Alkaliphilus oremlandii (strain OhILAs) (Clostridium oremlandii (strain OhILAs)).